We begin with the raw amino-acid sequence, 96 residues long: Large ribosomal subunit protein bL28 (96 aa).

A disordered region spans residues 1-21; sequence MSRVCELTGKGPMTGNNVSHA.

Belongs to the bacterial ribosomal protein bL28 family.

The chain is Large ribosomal subunit protein bL28 from Jannaschia sp. (strain CCS1).